The primary structure comprises 158 residues: MKDDFVIYNETDFYIKPYQDDFNAIFQKIKTLLAITEPLELSLIIVDAQEQLELNQKYRHKDYVADVITFALEEENKIDLFELTGLRSLGDIFICYEKALAQAAEYNHSPRREFAFLFTHGMLHILGYDHQTPADEEKMFNLQRKVLNDLQINRIPIK.

Zn(2+) contacts are provided by His-120, His-124, and His-130.

The protein belongs to the endoribonuclease YbeY family. Requires Zn(2+) as cofactor.

It localises to the cytoplasm. In terms of biological role, single strand-specific metallo-endoribonuclease involved in late-stage 70S ribosome quality control and in maturation of the 3' terminus of the 16S rRNA. This is Endoribonuclease YbeY from Spiroplasma citri.